A 313-amino-acid polypeptide reads, in one-letter code: tRNA dimethylallyltransferase (313 aa).

Position 10–17 (10–17 (GPTASGKT)) interacts with ATP. Substrate is bound at residue 12 to 17 (TASGKT). Interaction with substrate tRNA stretches follow at residues 35–38 (DSAM), 159–163 (QRIQR), and 240–245 (RCVGYR).

This sequence belongs to the IPP transferase family. As to quaternary structure, monomer. Mg(2+) is required as a cofactor.

It carries out the reaction adenosine(37) in tRNA + dimethylallyl diphosphate = N(6)-dimethylallyladenosine(37) in tRNA + diphosphate. In terms of biological role, catalyzes the transfer of a dimethylallyl group onto the adenine at position 37 in tRNAs that read codons beginning with uridine, leading to the formation of N6-(dimethylallyl)adenosine (i(6)A). The protein is tRNA dimethylallyltransferase of Legionella pneumophila (strain Corby).